The sequence spans 217 residues: Pyridoxine/pyridoxamine 5'-phosphate oxidase (217 aa).

Substrate contacts are provided by residues 13–16 and Lys71; that span reads RREY. Residues 66–71, 81–82, Arg87, Lys88, and Gln110 each bind FMN; these read RIVLLK and YT. Substrate-binding residues include Tyr128, Arg132, and Ser136. Residues 145–146 and Trp190 each bind FMN; that span reads QS. 196 to 198 is a binding site for substrate; the sequence is RLH. Arg200 is an FMN binding site.

This sequence belongs to the pyridoxamine 5'-phosphate oxidase family. Homodimer. Requires FMN as cofactor.

The catalysed reaction is pyridoxamine 5'-phosphate + O2 + H2O = pyridoxal 5'-phosphate + H2O2 + NH4(+). The enzyme catalyses pyridoxine 5'-phosphate + O2 = pyridoxal 5'-phosphate + H2O2. It functions in the pathway cofactor metabolism; pyridoxal 5'-phosphate salvage; pyridoxal 5'-phosphate from pyridoxamine 5'-phosphate: step 1/1. Its pathway is cofactor metabolism; pyridoxal 5'-phosphate salvage; pyridoxal 5'-phosphate from pyridoxine 5'-phosphate: step 1/1. In terms of biological role, catalyzes the oxidation of either pyridoxine 5'-phosphate (PNP) or pyridoxamine 5'-phosphate (PMP) into pyridoxal 5'-phosphate (PLP). The chain is Pyridoxine/pyridoxamine 5'-phosphate oxidase from Photorhabdus laumondii subsp. laumondii (strain DSM 15139 / CIP 105565 / TT01) (Photorhabdus luminescens subsp. laumondii).